The chain runs to 218 residues: Hypoxanthine-guanine phosphoribosyltransferase (218 aa).

Ala-2 bears the N-acetylalanine mark. Lys-69 serves as a coordination point for GMP. Lys-103 carries the N6-acetyllysine modification. Lys-115 is covalently cross-linked (Glycyl lysine isopeptide (Lys-Gly) (interchain with G-Cter in SUMO1); alternate). A Glycyl lysine isopeptide (Lys-Gly) (interchain with G-Cter in SUMO2); alternate cross-link involves residue Lys-115. Residues 134–142, Lys-166, 186–188, and Asp-194 each bind GMP; these read EDIIDTGKT and KFV. Residue Asp-138 is the Proton acceptor of the active site. Thr-142 bears the Phosphothreonine mark. Residue Asp-194 participates in Mg(2+) binding.

The protein belongs to the purine/pyrimidine phosphoribosyltransferase family. As to quaternary structure, homotetramer. Mg(2+) serves as cofactor.

Its subcellular location is the cytoplasm. The enzyme catalyses IMP + diphosphate = hypoxanthine + 5-phospho-alpha-D-ribose 1-diphosphate. It carries out the reaction GMP + diphosphate = guanine + 5-phospho-alpha-D-ribose 1-diphosphate. It participates in purine metabolism; IMP biosynthesis via salvage pathway; IMP from hypoxanthine: step 1/1. Functionally, converts guanine to guanosine monophosphate, and hypoxanthine to inosine monophosphate. Transfers the 5-phosphoribosyl group from 5-phosphoribosylpyrophosphate onto the purine. Plays a central role in the generation of purine nucleotides through the purine salvage pathway. The protein is Hypoxanthine-guanine phosphoribosyltransferase (HPRT1) of Pan troglodytes (Chimpanzee).